Reading from the N-terminus, the 1387-residue chain is Mediator of RNA polymerase II transcription subunit 13 (1387 aa).

Disordered stretches follow at residues 81-102 (ELNNESESPQPERKGHFTPEFS), 354-400 (HSAN…ESYS), and 620-676 (SVNS…DIPM). 2 stretches are compositionally biased toward polar residues: residues 354-367 (HSANNSNNVSSTGE) and 390-400 (SRQNFPTESYS).

It belongs to the Mediator complex subunit 13 family. As to quaternary structure, component of the SRB8-11 complex, which itself associates with the Mediator complex.

It is found in the nucleus. Functionally, component of the SRB8-11 complex. The SRB8-11 complex is a regulatory module of the Mediator complex which is itself involved in regulation of basal and activated RNA polymerase II-dependent transcription. The SRB8-11 complex may be involved in the transcriptional repression of a subset of genes regulated by Mediator. It may inhibit the association of the Mediator complex with RNA polymerase II to form the holoenzyme complex. The sequence is that of Mediator of RNA polymerase II transcription subunit 13 (SSN2) from Kluyveromyces lactis (strain ATCC 8585 / CBS 2359 / DSM 70799 / NBRC 1267 / NRRL Y-1140 / WM37) (Yeast).